Consider the following 161-residue polypeptide: Phosphopantetheine adenylyltransferase (161 aa).

Position 10 (threonine 10) interacts with substrate. ATP is bound by residues 10 to 11 (TF) and histidine 18. Substrate contacts are provided by lysine 42, methionine 74, and arginine 88. Residues 89–91 (GLR), glutamate 99, and 124–130 (WSFISSS) each bind ATP.

This sequence belongs to the bacterial CoaD family. In terms of assembly, homohexamer. It depends on Mg(2+) as a cofactor.

The protein resides in the cytoplasm. It catalyses the reaction (R)-4'-phosphopantetheine + ATP + H(+) = 3'-dephospho-CoA + diphosphate. The protein operates within cofactor biosynthesis; coenzyme A biosynthesis; CoA from (R)-pantothenate: step 4/5. Functionally, reversibly transfers an adenylyl group from ATP to 4'-phosphopantetheine, yielding dephospho-CoA (dPCoA) and pyrophosphate. The chain is Phosphopantetheine adenylyltransferase from Serratia proteamaculans (strain 568).